Reading from the N-terminus, the 203-residue chain is ATP-dependent Clp protease proteolytic subunit (203 aa).

The active-site Nucleophile is serine 107. Histidine 132 is an active-site residue.

The protein belongs to the peptidase S14 family. In terms of assembly, fourteen ClpP subunits assemble into 2 heptameric rings which stack back to back to give a disk-like structure with a central cavity, resembling the structure of eukaryotic proteasomes.

It localises to the cytoplasm. It carries out the reaction Hydrolysis of proteins to small peptides in the presence of ATP and magnesium. alpha-casein is the usual test substrate. In the absence of ATP, only oligopeptides shorter than five residues are hydrolyzed (such as succinyl-Leu-Tyr-|-NHMec, and Leu-Tyr-Leu-|-Tyr-Trp, in which cleavage of the -Tyr-|-Leu- and -Tyr-|-Trp bonds also occurs).. Functionally, cleaves peptides in various proteins in a process that requires ATP hydrolysis. Has a chymotrypsin-like activity. Plays a major role in the degradation of misfolded proteins. In Shewanella sediminis (strain HAW-EB3), this protein is ATP-dependent Clp protease proteolytic subunit.